The sequence spans 417 residues: Peptidyl-Asp metalloendopeptidase (417 aa).

The first 23 residues, 1 to 23, serve as a signal peptide directing secretion; sequence MKSKSMCTTVGLIAMCLAGSAAA. Residue histidine 331 participates in Zn(2+) binding. The active site involves glutamate 332. Zn(2+) contacts are provided by histidine 335 and histidine 341.

The protein belongs to the peptidase M72 family. Zn(2+) is required as a cofactor.

The catalysed reaction is Cleavage of Xaa-|-Asp, Xaa-|-Glu and Xaa-|-cysteic acid bonds.. Metalloprotease, specifically cleaves on the N-terminal side of aspartyl, glutamyl and cysteic acid residues. This Xanthomonas campestris pv. campestris (strain ATCC 33913 / DSM 3586 / NCPPB 528 / LMG 568 / P 25) protein is Peptidyl-Asp metalloendopeptidase.